Here is a 101-residue protein sequence, read N- to C-terminus: Small ribosomal subunit protein uS14 (101 aa).

It belongs to the universal ribosomal protein uS14 family. Part of the 30S ribosomal subunit. Contacts proteins S3 and S10.

In terms of biological role, binds 16S rRNA, required for the assembly of 30S particles and may also be responsible for determining the conformation of the 16S rRNA at the A site. This Photobacterium profundum (strain SS9) protein is Small ribosomal subunit protein uS14.